The primary structure comprises 156 residues: Small ribosomal subunit protein uS7 (156 aa).

Belongs to the universal ribosomal protein uS7 family. As to quaternary structure, part of the 30S ribosomal subunit. Contacts proteins S9 and S11.

In terms of biological role, one of the primary rRNA binding proteins, it binds directly to 16S rRNA where it nucleates assembly of the head domain of the 30S subunit. Is located at the subunit interface close to the decoding center, probably blocks exit of the E-site tRNA. The chain is Small ribosomal subunit protein uS7 from Synechococcus elongatus (strain ATCC 33912 / PCC 7942 / FACHB-805) (Anacystis nidulans R2).